Here is a 448-residue protein sequence, read N- to C-terminus: Keratin, type I cytoskeletal 27 (448 aa).

Residues 1–73 are head; that stretch reads MSVRFSSASR…ANEHGLLSGN (73 aa). Residues 74 to 109 are coil 1A; that stretch reads EKVTMQNLNDRLASYLENVQALEEANADLEQKIKDW. In terms of domain architecture, IF rod spans 74–389; sequence EKVTMQNLND…RLIDGDEGSC (316 aa). Positions 110–131 are linker 1; the sequence is YEKFGPGSCRGLDHDYSRYFPI. Residues 132-223 form a coil 1B region; it reads IDDLRTQIIS…KNHEEEMQAL (92 aa). Residues 224-246 are linker 12; it reads QCAAGGNVNVEMNAAPGVDLTVL. The coil 2 stretch occupies residues 247–385; the sequence is LNNMRAEYEA…ETYCRLIDGD (139 aa). Positions 386 to 448 are tail; it reads EGSCVKAKGQ…VNKTEQRIPS (63 aa). The disordered stretch occupies residues 427 to 448; sequence SRVHTLEEKSTKVNKTEQRIPS. Basic and acidic residues predominate over residues 430 to 448; sequence HTLEEKSTKVNKTEQRIPS.

The protein belongs to the intermediate filament family. Heterotetramer of two type I and two type II keratins. Interacts with KRT6A to form filaments. In terms of tissue distribution, expressed in skin. Expressed in the Henle layer and cuticle of the irs in hair follicle bulb. In the hair follicle, expression was observed in all layers of the irs but was stronger in the Henle layer and cuticle than the Huxley layer until the Henle layer differentiated (at protein level).

The protein resides in the cytoplasm. Its function is as follows. Essential for the proper assembly of type I and type II keratin protein complexes and formation of keratin intermediate filaments in the inner root sheath (irs). This chain is Keratin, type I cytoskeletal 27, found in Mus musculus (Mouse).